Reading from the N-terminus, the 64-residue chain is Alpha-conotoxin Lt14.1 (64 aa).

The first 20 residues, 1–20, serve as a signal peptide directing secretion; it reads MKLSVMFIVFLMLTMPMTCA. Residues 21–50 constitute a propeptide that is removed on maturation; sequence GISRSATNGGEADVRAHDKAANLMALLQER. 2 cysteine pairs are disulfide-bonded: Cys-52–Cys-60 and Cys-56–Cys-63. Cys-63 is subject to Cysteine amide.

This sequence belongs to the conotoxin L superfamily. Post-translationally, may contain a 4-hydroxyproline. Expressed by the venom duct.

The protein localises to the secreted. Alpha-conotoxins act on postsynaptic membranes, they bind to the nicotinic acetylcholine receptors (nAChR) and thus inhibit them. This synthetic peptide displays analgesic activity in a hot plate assay. Analgesia is also observed against second phase pain in formalin-induced inflammatory pain model, and in a rat model of mechanically-induced pain. Effects downstream of nAChR are inhibition of calcium influx, inhibition of ERK1/2 phosphorylation and inhibition of c-fos/NOS expression. Genes associated with drug dependence are not up-regulated by this toxin. Treatment with this toxin reversed morphine withdrawal symptoms in mice. This chain is Alpha-conotoxin Lt14.1, found in Conus litteratus (Lettered cone).